A 141-amino-acid chain; its full sequence is MAVERTFSIIKPNAVAKNNIGAIYARFESAGFKIIAAKMLHLTKEQAEGFYAEHKGRPFFDGLVEFMTSGPVMIQVLEGENAVQRHRDIMGATNPDNALAGTLRADFADSFTENAVHGSDAVESAQREIAYFFSENEICPR.

Lys11, Phe59, Arg87, Thr93, Arg104, and Asn114 together coordinate ATP. The Pros-phosphohistidine intermediate role is filled by His117.

The protein belongs to the NDK family. In terms of assembly, homotetramer. It depends on Mg(2+) as a cofactor.

It is found in the cytoplasm. The enzyme catalyses a 2'-deoxyribonucleoside 5'-diphosphate + ATP = a 2'-deoxyribonucleoside 5'-triphosphate + ADP. It carries out the reaction a ribonucleoside 5'-diphosphate + ATP = a ribonucleoside 5'-triphosphate + ADP. In terms of biological role, major role in the synthesis of nucleoside triphosphates other than ATP. The ATP gamma phosphate is transferred to the NDP beta phosphate via a ping-pong mechanism, using a phosphorylated active-site intermediate. The chain is Nucleoside diphosphate kinase from Yersinia enterocolitica serotype O:8 / biotype 1B (strain NCTC 13174 / 8081).